Reading from the N-terminus, the 481-residue chain is Protein FAM83E (481 aa).

Positions 1–296 (MAASQLAALE…LYAASRPLSA (296 aa)) are DUF1669. A disordered region spans residues 351–481 (KQETPTTTGP…ASGSGSGRRR (131 aa)). Residues 371-385 (RTRTTSGPPTRPSRS) show a composition bias toward low complexity. Polar residues-rich tracts occupy residues 391 to 400 (RLSQLSGSSD) and 465 to 474 (NATTSDWASG).

It belongs to the FAM83 family. Directly interacts (via DUF1669) with CSNK1A1, CSNK1A1L, CSNK1D and CSNK1E. May interact with RAF1.

The protein localises to the cytoplasm. It is found in the perinuclear region. Its function is as follows. May play a role in MAPK signaling. The protein is Protein FAM83E of Mus musculus (Mouse).